The primary structure comprises 961 residues: Ubiquitin carboxyl-terminal hydrolase 4 (961 aa).

Positions P11–V122 constitute a DUSP domain. The segment at T27 to E216 is necessary for interaction with SART3. The Nuclear export signal signature appears at V133–K141. Residues L142–R226 form the Ubiquitin-like 1 domain. Residues N219 to A257 are disordered. Residues P225–T243 show a composition bias toward polar residues. Residues L229 to P295 are required for USP4 activation by providing conformational flexibility between the DUSP and catalytic domains. Over residues S244–A257 the composition is skewed to low complexity. Residues C302 to R921 enclose the USP domain. C311 is a catalytic residue. Positions P384 to F386 are regulates ubiquitin dissociation. The necessary for interaction with RBL2 stretch occupies residues L405 to E407. S445 carries the post-translational modification Phosphoserine. A necessary for interaction with RB1 and RBL2 region spans residues L459–E463. Positions 461 and 464 each coordinate Zn(2+). The Ubiquitin-like 2 domain maps to L483–P571. The tract at residues K485–A773 is interacts with DUSP and ubiquitin-like 1 domains and is required for USP4 activation. The segment at S641 to R700 is disordered. S655, S674, and S679 each carry phosphoserine. The Nuclear localization signal signature appears at Q765–K770. The Zn(2+) site is built by C797 and C800. H879 is a catalytic residue. The disordered stretch occupies residues E924 to N961. Over residues L950–N961 the composition is skewed to acidic residues.

The protein belongs to the peptidase C19 family. USP4 subfamily. In terms of assembly, interacts with RB1 (both dephosphorylated and hypophosphorylated forms). Interacts with RBL1 and RBL2. Interacts with ADORA2A (via cytoplasmic C-terminus); the interaction is direct. Interacts with SART3; recruits USP4 to its substrate PRPF3. In terms of processing, phosphorylated at Ser-445 by PKB/AKT1 in response to EGF stimulus, promoting its ability deubiquitinate RHEB. Monoubiquitinated by TRIM21. Ubiquitination does not lead to its proteasomal degradation. Autodeubiquitinated. Expressed in hippocampus and striatum (at protein level).

The protein localises to the cytoplasm. Its subcellular location is the nucleus. It carries out the reaction Thiol-dependent hydrolysis of ester, thioester, amide, peptide and isopeptide bonds formed by the C-terminal Gly of ubiquitin (a 76-residue protein attached to proteins as an intracellular targeting signal).. With respect to regulation, the completion of the deubiquitinase reaction is mediated by the DUSP and ubiquitin-like 1 domains which promotes the release of ubiquitin from the catalytic site enabling subsequent reactions to occur. Its function is as follows. Deubiquitinating enzyme that removes conjugated ubiquitin from target proteins. Deubiquitinates PDPK1. Deubiquitinates TRIM21. Deubiquitinates receptor ADORA2A which increases the amount of functional receptor at the cell surface. Deubiquitinates HAS2. Deubiquitinates RHEB in response to EGF signaling, promoting mTORC1 signaling. May regulate mRNA splicing through deubiquitination of the U4 spliceosomal protein PRPF3. This may prevent its recognition by the U5 component PRPF8 thereby destabilizing interactions within the U4/U6.U5 snRNP. May also play a role in the regulation of quality control in the ER. The protein is Ubiquitin carboxyl-terminal hydrolase 4 (Usp4) of Rattus norvegicus (Rat).